A 289-amino-acid chain; its full sequence is Leucine--tRNA ligase subunit beta (289 aa).

The 'KMSKS' region motif lies at 45-49 (KMSKS). Position 48 (lysine 48) interacts with ATP.

Belongs to the class-I aminoacyl-tRNA synthetase family. In terms of assembly, seems to consist of an alpha chain and a beta chain.

It localises to the cytoplasm. The catalysed reaction is tRNA(Leu) + L-leucine + ATP = L-leucyl-tRNA(Leu) + AMP + diphosphate. This is Leucine--tRNA ligase subunit beta (leuS') from Aquifex aeolicus (strain VF5).